Consider the following 252-residue polypeptide: Geranylgeranylglyceryl phosphate synthase (252 aa).

The Mg(2+) site is built by D26 and S55. Residues 174–180 (YLEAGSG), 205–206 (GG), and 227–228 (GT) each bind sn-glycerol 1-phosphate.

It belongs to the GGGP/HepGP synthase family. Group II subfamily. In terms of assembly, homotetramer. Homohexamer. The cofactor is Mg(2+).

The protein localises to the cytoplasm. The catalysed reaction is sn-glycerol 1-phosphate + (2E,6E,10E)-geranylgeranyl diphosphate = sn-3-O-(geranylgeranyl)glycerol 1-phosphate + diphosphate. Its pathway is membrane lipid metabolism; glycerophospholipid metabolism. Functionally, prenyltransferase that catalyzes the transfer of the geranylgeranyl moiety of geranylgeranyl diphosphate (GGPP) to the C3 hydroxyl of sn-glycerol-1-phosphate (G1P). This reaction is the first ether-bond-formation step in the biosynthesis of archaeal membrane lipids. This chain is Geranylgeranylglyceryl phosphate synthase, found in Thermococcus kodakarensis (strain ATCC BAA-918 / JCM 12380 / KOD1) (Pyrococcus kodakaraensis (strain KOD1)).